We begin with the raw amino-acid sequence, 275 residues long: Large ribosomal subunit protein uL2 (275 aa).

A compositionally biased stretch (polar residues) spans 38–53; that stretch reads NSKAGRNNNGRITTRH. Disordered regions lie at residues 38–59 and 224–257; these read NSKA…GGHK and AMNP…KGFR.

It belongs to the universal ribosomal protein uL2 family. In terms of assembly, part of the 50S ribosomal subunit. Forms a bridge to the 30S subunit in the 70S ribosome.

Functionally, one of the primary rRNA binding proteins. Required for association of the 30S and 50S subunits to form the 70S ribosome, for tRNA binding and peptide bond formation. It has been suggested to have peptidyltransferase activity; this is somewhat controversial. Makes several contacts with the 16S rRNA in the 70S ribosome. This is Large ribosomal subunit protein uL2 from Burkholderia thailandensis (strain ATCC 700388 / DSM 13276 / CCUG 48851 / CIP 106301 / E264).